Reading from the N-terminus, the 39-residue chain is Pro-opiomelanocortin (39 aa).

Ser-1 bears the N-acetylserine mark. Position 13 is a valine amide (Val-13). Ser-31 bears the Phosphoserine mark.

It belongs to the POMC family.

It localises to the secreted. In terms of biological role, precursor protein for pituitary hormones that regulate stress and environmental adaptation. Its function is as follows. Stimulates the adrenal glands to release cortisol. Functionally, anorexigenic peptide. Increases the pigmentation of skin by increasing melanin production in melanocytes. In Balaenoptera borealis (Sei whale), this protein is Pro-opiomelanocortin (POMC).